The following is a 156-amino-acid chain: Transcriptional repressor NrdR (156 aa).

The segment at 3-34 (CPSCQFNGTRVVDSRPVDDNKEIRRRRECESC) is a zinc-finger region. The ATP-cone domain maps to 49–139 (LVVVKKEGSR…VYRQFKDINV (91 aa)).

The protein belongs to the NrdR family. The cofactor is Zn(2+).

In terms of biological role, negatively regulates transcription of bacterial ribonucleotide reductase nrd genes and operons by binding to NrdR-boxes. The chain is Transcriptional repressor NrdR from Lysinibacillus sphaericus (strain C3-41).